A 45-amino-acid chain; its full sequence is Photosystem II reaction center protein K (45 aa).

The propeptide occupies 1–8 (MEAVLLLA). Residues 24-44 (MPVIPLFFLALAFVWQAAVGF) form a helical membrane-spanning segment.

It belongs to the PsbK family. PSII is composed of 1 copy each of membrane proteins PsbA, PsbB, PsbC, PsbD, PsbE, PsbF, PsbH, PsbI, PsbJ, PsbK, PsbL, PsbM, PsbT, PsbX, PsbY, PsbZ, Psb30/Ycf12, peripheral proteins PsbO, CyanoQ (PsbQ), PsbU, PsbV and a large number of cofactors. It forms dimeric complexes.

The protein localises to the cellular thylakoid membrane. In terms of biological role, one of the components of the core complex of photosystem II (PSII). PSII is a light-driven water:plastoquinone oxidoreductase that uses light energy to abstract electrons from H(2)O, generating O(2) and a proton gradient subsequently used for ATP formation. It consists of a core antenna complex that captures photons, and an electron transfer chain that converts photonic excitation into a charge separation. The sequence is that of Photosystem II reaction center protein K from Acaryochloris marina (strain MBIC 11017).